An 804-amino-acid chain; its full sequence is Phenylalanine--tRNA ligase beta subunit (804 aa).

The tRNA-binding domain occupies 38–148 (RAAFRAFTIA…ENAPVGTSFA (111 aa)). A B5 domain is found at 401 to 476 (HTARVIDFPV…RIHGINRIDP (76 aa)). Mg(2+) contacts are provided by Asp454, Asp460, Glu463, and Glu464. In terms of domain architecture, FDX-ACB spans 710-803 (SLFQSLKRDY…VAKQTGGVLR (94 aa)).

This sequence belongs to the phenylalanyl-tRNA synthetase beta subunit family. Type 1 subfamily. In terms of assembly, tetramer of two alpha and two beta subunits. It depends on Mg(2+) as a cofactor.

The protein resides in the cytoplasm. The enzyme catalyses tRNA(Phe) + L-phenylalanine + ATP = L-phenylalanyl-tRNA(Phe) + AMP + diphosphate + H(+). This is Phenylalanine--tRNA ligase beta subunit from Brucella abortus (strain 2308).